Consider the following 326-residue polypeptide: Phospho-N-acetylmuramoyl-pentapeptide-transferase (326 aa).

10 helical membrane passes run 4 to 24 (IWVA…LVIP), 49 to 69 (TPTM…FLLI), 74 to 94 (GLIV…DDYI), 109 to 129 (KLLG…FEAG), 151 to 171 (LGWW…SNAV), 179 to 199 (GLAA…ALAA), 203 to 223 (GVAA…FFNF), 228 to 248 (VFMG…AAVV), 254 to 274 (LFLI…IQVI), and 303 to 323 (VVIT…AGLY).

Belongs to the glycosyltransferase 4 family. MraY subfamily. Mg(2+) is required as a cofactor.

Its subcellular location is the cell membrane. It catalyses the reaction UDP-N-acetyl-alpha-D-muramoyl-L-alanyl-gamma-D-glutamyl-meso-2,6-diaminopimeloyl-D-alanyl-D-alanine + di-trans,octa-cis-undecaprenyl phosphate = di-trans,octa-cis-undecaprenyl diphospho-N-acetyl-alpha-D-muramoyl-L-alanyl-D-glutamyl-meso-2,6-diaminopimeloyl-D-alanyl-D-alanine + UMP. It participates in cell wall biogenesis; peptidoglycan biosynthesis. In terms of biological role, catalyzes the initial step of the lipid cycle reactions in the biosynthesis of the cell wall peptidoglycan: transfers peptidoglycan precursor phospho-MurNAc-pentapeptide from UDP-MurNAc-pentapeptide onto the lipid carrier undecaprenyl phosphate, yielding undecaprenyl-pyrophosphoryl-MurNAc-pentapeptide, known as lipid I. The sequence is that of Phospho-N-acetylmuramoyl-pentapeptide-transferase from Pelotomaculum thermopropionicum (strain DSM 13744 / JCM 10971 / SI).